Here is a 166-residue protein sequence, read N- to C-terminus: Early E3 18.5 kDa glycoprotein (166 aa).

The signal sequence occupies residues 1 to 19; the sequence is MGPILVLLVLLSLLEPGSA. The Lumenal segment spans residues 20 to 131; sequence NYDPCLDFDP…SKDNIVTFSI (112 aa). N-linked (GlcNAc...) asparagine; by host glycosylation is present at N31. 2 cysteine pairs are disulfide-bonded: C32/C50 and C44/C106. N-linked (GlcNAc...) asparagine; by host glycans are attached at residues N63, N67, and N97. The chain crosses the membrane as a helical span at residues 132–152; it reads AYCLCACLLTALLCVCIHLLV. Over 153–166 the chain is Cytoplasmic; that stretch reads TTRIKNANNKEKMP. A Di-lysine motif motif is present at residues 162-166; the sequence is KEKMP.

Belongs to the adenoviridae E19 family. Both disulfide bonds are absolutely critical for the interaction with MHC antigens. Post-translationally, N-glycosylated; high-mannose.

The protein localises to the host endoplasmic reticulum membrane. In terms of biological role, binds and retains class I heavy chains in the endoplasmic reticulum during the early period of virus infection, thereby impairing their transport to the cell surface. Also delays the expression of class I alleles that it cannot affect by direct retention. Binds transporters associated with antigen processing (TAP) and acts as a tapasin inhibitor, preventing class I/TAP association. In consequence, infected cells are masked for immune recognition by cytotoxic T-lymphocytes. This is Early E3 18.5 kDa glycoprotein from Human adenovirus B serotype 11 (strain Slobiski) (HAdV-11).